Reading from the N-terminus, the 119-residue chain is Large ribosomal subunit protein bL20 (119 aa).

The protein belongs to the bacterial ribosomal protein bL20 family.

In terms of biological role, binds directly to 23S ribosomal RNA and is necessary for the in vitro assembly process of the 50S ribosomal subunit. It is not involved in the protein synthesizing functions of that subunit. The chain is Large ribosomal subunit protein bL20 from Anoxybacillus flavithermus (strain DSM 21510 / WK1).